Consider the following 389-residue polypeptide: Protein IQ-domain 26 (389 aa).

2 IQ domains span residues 106–134 (ERWAAVKIQSVFKGYLARKALRALKGLVK) and 135–157 (LQALVRGYLVRKRAAETLHSMQA). The calmodulin-binding stretch occupies residues 137–151 (ALVRGYLVRKRAAET). A disordered region spans residues 347–374 (SVSGVRMVQPQPQPQTQTQQQKRSPCSY).

This sequence belongs to the IQD family. Binds to multiple calmodulin (CaM) in the presence of Ca(2+) and CaM-like proteins.

Its subcellular location is the cell membrane. It is found in the cytoplasm. The protein localises to the cytoskeleton. In terms of biological role, may be involved in cooperative interactions with calmodulins or calmodulin-like proteins. Recruits calmodulin proteins to microtubules, thus being a potential scaffold in cellular signaling and trafficking. May associate with nucleic acids and regulate gene expression at the transcriptional or post-transcriptional level. The sequence is that of Protein IQ-domain 26 from Arabidopsis thaliana (Mouse-ear cress).